Consider the following 213-residue polypeptide: dITP/XTP pyrophosphatase (213 aa).

7–12 (TSNLDK) contacts substrate. Residue aspartate 74 is the Proton acceptor of the active site. Residue aspartate 74 coordinates Mg(2+). Substrate contacts are provided by residues serine 75, 165–168 (FGYD), lysine 188, and 193–194 (HR).

It belongs to the HAM1 NTPase family. In terms of assembly, homodimer. Mg(2+) serves as cofactor.

It carries out the reaction XTP + H2O = XMP + diphosphate + H(+). It catalyses the reaction dITP + H2O = dIMP + diphosphate + H(+). The catalysed reaction is ITP + H2O = IMP + diphosphate + H(+). Pyrophosphatase that catalyzes the hydrolysis of nucleoside triphosphates to their monophosphate derivatives, with a high preference for the non-canonical purine nucleotides XTP (xanthosine triphosphate), dITP (deoxyinosine triphosphate) and ITP. Seems to function as a house-cleaning enzyme that removes non-canonical purine nucleotides from the nucleotide pool, thus preventing their incorporation into DNA/RNA and avoiding chromosomal lesions. The polypeptide is dITP/XTP pyrophosphatase (Campylobacter concisus (strain 13826)).